The following is a 232-amino-acid chain: Ubiquinone biosynthesis O-methyltransferase (232 aa).

Positions 36, 55, 76, and 120 each coordinate S-adenosyl-L-methionine.

The protein belongs to the methyltransferase superfamily. UbiG/COQ3 family.

The catalysed reaction is a 3-demethylubiquinol + S-adenosyl-L-methionine = a ubiquinol + S-adenosyl-L-homocysteine + H(+). It carries out the reaction a 3-(all-trans-polyprenyl)benzene-1,2-diol + S-adenosyl-L-methionine = a 2-methoxy-6-(all-trans-polyprenyl)phenol + S-adenosyl-L-homocysteine + H(+). The protein operates within cofactor biosynthesis; ubiquinone biosynthesis. Its function is as follows. O-methyltransferase that catalyzes the 2 O-methylation steps in the ubiquinone biosynthetic pathway. The protein is Ubiquinone biosynthesis O-methyltransferase of Pseudomonas putida (strain ATCC 700007 / DSM 6899 / JCM 31910 / BCRC 17059 / LMG 24140 / F1).